Consider the following 308-residue polypeptide: Regulating synaptic membrane exocytosis protein 3 (308 aa).

Positions S86–T120 are disordered. Residues D109–T120 are compositionally biased toward low complexity. The region spanning P156–Y274 is the C2 domain. Phosphoserine is present on residues S295 and S298.

Binds PPFIA3. Does not bind RAB3.

The protein resides in the synapse. Functionally, regulates synaptic membrane exocytosis. This Homo sapiens (Human) protein is Regulating synaptic membrane exocytosis protein 3 (RIMS3).